The sequence spans 216 residues: Adenylate kinase (216 aa).

10–15 serves as a coordination point for ATP; that stretch reads GAGKGT. Residues 30 to 59 form an NMP region; sequence STGDMFRAAMKAETEMGLQAKSFIDKGALV. Residues Thr31, Arg36, 57 to 59, 85 to 88, and Gln92 each bind AMP; these read ALV and GFPR. Residues 126-163 form an LID region; that stretch reads GRRICKECGATYHLEFNAPAKADVCDKCGGELYQRSDD. Position 127 (Arg127) interacts with ATP. Positions 130 and 133 each coordinate Zn(2+). 136–137 contributes to the ATP binding site; the sequence is TY. Residues Cys150 and Cys153 each coordinate Zn(2+). The AMP site is built by Arg160 and Arg171. Gln199 contacts ATP.

It belongs to the adenylate kinase family. Monomer.

The protein resides in the cytoplasm. The enzyme catalyses AMP + ATP = 2 ADP. It participates in purine metabolism; AMP biosynthesis via salvage pathway; AMP from ADP: step 1/1. Its function is as follows. Catalyzes the reversible transfer of the terminal phosphate group between ATP and AMP. Plays an important role in cellular energy homeostasis and in adenine nucleotide metabolism. The protein is Adenylate kinase of Bacillus anthracis (strain A0248).